A 163-amino-acid polypeptide reads, in one-letter code: Probable protein tyrosine phosphatase type IVA B (163 aa).

Residues 10–161 (TIIESSTHKF…YKASKKAGCK (152 aa)) enclose the Tyrosine-protein phosphatase domain. Cysteine 49 and cysteine 104 form a disulfide bridge. The Proton donor role is filled by aspartate 70. Cysteine 104 acts as the Phosphocysteine intermediate in catalysis. 105–110 (IAGLGR) serves as a coordination point for phosphate. Arginine 110 contributes to the substrate binding site. At cysteine 160 the chain carries Cysteine methyl ester. Residue cysteine 160 is the site of S-farnesyl cysteine attachment. Residues 161 to 163 (KIM) constitute a propeptide, removed in mature form.

This sequence belongs to the protein-tyrosine phosphatase family.

Its subcellular location is the membrane. The enzyme catalyses O-phospho-L-tyrosyl-[protein] + H2O = L-tyrosyl-[protein] + phosphate. This is Probable protein tyrosine phosphatase type IVA B from Dictyostelium discoideum (Social amoeba).